The following is a 627-amino-acid chain: MQSRALSRLRSYYKRSSVFPSSDNDRSVQLFNLVRSIYSSSSRPRVPQPEWLIGELCKVGKIAEARKLFDGLPERDVVTWTHVITGYIKLGDMREARELFDRVDSRKNVVTWTAMVSGYLRSKQLSIAEMLFQEMPERNVVSWNTMIDGYAQSGRIDKALELFDEMPERNIVSWNSMVKALVQRGRIDEAMNLFERMPRRDVVSWTAMVDGLAKNGKVDEARRLFDCMPERNIISWNAMITGYAQNNRIDEADQLFQVMPERDFASWNTMITGFIRNREMNKACGLFDRMPEKNVISWTTMITGYVENKENEEALNVFSKMLRDGSVKPNVGTYVSILSACSDLAGLVEGQQIHQLISKSVHQKNEIVTSALLNMYSKSGELIAARKMFDNGLVCQRDLISWNSMIAVYAHHGHGKEAIEMYNQMRKHGFKPSAVTYLNLLFACSHAGLVEKGMEFFKDLVRDESLPLREEHYTCLVDLCGRAGRLKDVTNFINCDDARLSRSFYGAILSACNVHNEVSIAKEVVKKVLETGSDDAGTYVLMSNIYAANGKREEAAEMRMKMKEKGLKKQPGCSWVKVGKQNHLFVVGDKSHPQFEALDSILSDLRNKMRKNKNVTSDAEEAEFLVI.

The transit peptide at 1 to 44 (MQSRALSRLRSYYKRSSVFPSSDNDRSVQLFNLVRSIYSSSSRP) directs the protein to the mitochondrion. 14 PPR repeats span residues 45–75 (RVPQ…LPER), 76–110 (DVVT…KNVV), 111–138 (TWTA…MPER), 139–173 (NVVS…NIVS), 174–200 (WNSM…MPRR), 201–235 (DVVS…NIIS), 236–262 (WNAM…MPER), 263–293 (DFAS…MPEK), 294–328 (NVIS…GSVK), 330–360 (NVGT…ISKS), 365–396 (NEIV…LVCQ), 398–432 (DLIS…GFKP), 433–467 (SAVT…ESLP), and 469–499 (REEH…DDAR). Residues 504 to 579 (FYGAILSACN…QPGCSWVKVG (76 aa)) are type E motif. Residues 580–610 (KQNHLFVVGDKSHPQFEALDSILSDLRNKMR) are type E(+) motif.

The protein belongs to the PPR family. PCMP-E subfamily.

The protein localises to the mitochondrion. In Arabidopsis thaliana (Mouse-ear cress), this protein is Pentatricopeptide repeat-containing protein At2g35030, mitochondrial (PCMP-E15).